We begin with the raw amino-acid sequence, 197 residues long: 22.7 kDa class IV heat shock protein (197 aa).

The signal sequence occupies residues 1–28 (MSLKPLNMLLVPFLLLILAADFPLKAKA). Positions 68-184 (PSITLSHARV…GPRMVSIVEE (117 aa)) constitute a sHSP domain. The short motif at 194 to 197 (DELK) is the Prevents secretion from ER element.

The protein belongs to the small heat shock protein (HSP20) family. In terms of assembly, forms oligomeric structures.

The protein resides in the endoplasmic reticulum lumen. In Pisum sativum (Garden pea), this protein is 22.7 kDa class IV heat shock protein (HSP22.7).